The primary structure comprises 451 residues: MKRKYFGTDGIRGQSNIFPMTPDLAMRVGIAVGTIFRNGAHRHRVVIGKDTRLSGYMLENAMVAGFTAAGLDVFLLGPIPTPGVAMLTRSLRADIGVMISASHNAFRDNGIKLFGPDGYKLSDDIEEKIEELLDQDMTRQLAKPEDIGRAKRVDGDIYRYIEQAKRTLPRDVTLTGLRIAIDCANGAAYKVAPSALWELGAEVVPIGTEPNGVNINLECGSTHPAALQKKVHEVRADIGIALDGDADRVLIIDEEGQVIDGDQLMAVIADSWAADGMLKGGGIAATVMSNLGLERYLQARRLKLHRTKVGDRYVVEQMRQDGLNVGGEQSGHIVLSDFGTTGDGLVAALQILAVVKRQGKTVSEICRRFEPVPQVLKNVRISAGKPLEDAGVKQAIADAEAQLAKNGRLLIRPSGTEPLIRVMAEGDDRGKVERIVDELVSVIGAVRNAAA.

Serine 102 (phosphoserine intermediate) is an active-site residue. Mg(2+) contacts are provided by serine 102, aspartate 243, aspartate 245, and aspartate 247. The residue at position 102 (serine 102) is a Phosphoserine.

This sequence belongs to the phosphohexose mutase family. It depends on Mg(2+) as a cofactor. Activated by phosphorylation.

It catalyses the reaction alpha-D-glucosamine 1-phosphate = D-glucosamine 6-phosphate. In terms of biological role, catalyzes the conversion of glucosamine-6-phosphate to glucosamine-1-phosphate. In Sinorhizobium medicae (strain WSM419) (Ensifer medicae), this protein is Phosphoglucosamine mutase.